Here is a 224-residue protein sequence, read N- to C-terminus: C-&gt;U-editing enzyme APOBEC-2 (224 aa).

The interval 1–23 (MAQKEEAAEAAAPASQNGDDLEN) is disordered. Residues Glu60 and His98 each coordinate Zn(2+). The CMP/dCMP-type deaminase domain occupies 64–169 (GRNKTFLCYV…PEVQAALKKL (106 aa)). The active-site Proton donor is the Glu100. 2 residues coordinate Zn(2+): Cys128 and Cys131.

The protein belongs to the cytidine and deoxycytidylate deaminase family. Homotetramer. Zn(2+) is required as a cofactor. In terms of tissue distribution, expressed exclusively in heart and skeletal muscle.

It carries out the reaction cytidine(6666) in apoB mRNA + H2O + H(+) = uridine(6666) in apoB mRNA + NH4(+). Its function is as follows. Probable C to U editing enzyme whose physiological substrate is not yet known. Does not display detectable apoB mRNA editing. Has a low intrinsic cytidine deaminase activity. May play a role in the epigenetic regulation of gene expression through the process of active DNA demethylation. The protein is C-&gt;U-editing enzyme APOBEC-2 (Apobec2) of Mus musculus (Mouse).